Consider the following 194-residue polypeptide: Ubiquitin-conjugating enzyme E2 T (194 aa).

The UBC core domain occupies 2–152; sequence QRVSRLKREM…AKKWTAEHAI (151 aa). C86 functions as the Glycyl thioester intermediate in the catalytic mechanism. 2 stretches are compositionally biased toward basic and acidic residues: residues 158–170 and 185–194; these read CVETDGKTPENKN and NLEHTKKVCL. Residues 158–194 are disordered; sequence CVETDGKTPENKNLKTSHKREALSAQENLEHTKKVCL.

The protein belongs to the ubiquitin-conjugating enzyme family.

Its subcellular location is the nucleus. It catalyses the reaction S-ubiquitinyl-[E1 ubiquitin-activating enzyme]-L-cysteine + [E2 ubiquitin-conjugating enzyme]-L-cysteine = [E1 ubiquitin-activating enzyme]-L-cysteine + S-ubiquitinyl-[E2 ubiquitin-conjugating enzyme]-L-cysteine.. The protein operates within protein modification; protein ubiquitination. Its function is as follows. Accepts ubiquitin from the E1 complex and catalyzes its covalent attachment to other proteins. Catalyzes monoubiquitination. Involved in DNA repair. This Danio rerio (Zebrafish) protein is Ubiquitin-conjugating enzyme E2 T (ube2t).